The sequence spans 160 residues: Vesicle transport protein SFT2B (160 aa).

Position 1 is an N-acetylmethionine (Met-1). Over 1-36 (MDKLKKVLSGQDTEDRSGLSEVVEASSLSWSTRIKG) the chain is Cytoplasmic. Position 9 is a phosphoserine (Ser-9). A helical membrane pass occupies residues 37–57 (FIACFAIGILCSLLGTVLLWV). At 58–63 (PRKGLH) the chain is on the lumenal side. The helical transmembrane segment at 64-84 (LFAVFYTFGNIASIGSTIFLM) threads the bilayer. Topologically, residues 85–98 (GPVKQLKRMFEPTR) are cytoplasmic. The chain crosses the membrane as a helical span at residues 99–119 (LIATIMVLLCFALTLCSAFWW). Topologically, residues 120-123 (HNKG) are lumenal. The chain crosses the membrane as a helical span at residues 124–144 (LALIFCILQSLALTWYSLSFI). Topologically, residues 145–160 (PFARDAVKKCFAVCLA) are cytoplasmic.

The protein belongs to the SFT2 family.

It localises to the membrane. In terms of biological role, may be involved in fusion of retrograde transport vesicles derived from an endocytic compartment with the Golgi complex. This is Vesicle transport protein SFT2B from Homo sapiens (Human).